A 155-amino-acid polypeptide reads, in one-letter code: uncharacterized protein (155 aa).

Positions 1–23 (MTILSLSRFMLAGVLLASFNASA) are cleaved as a signal peptide.

It to E.coli YfjT.

This is an uncharacterized protein from Escherichia coli (strain K12).